A 65-amino-acid chain; its full sequence is Prokaryotic ubiquitin-like protein Pup (65 aa).

Residues 1–14 (MSGHEQQRPSRREE) are compositionally biased toward basic and acidic residues. The disordered stretch occupies residues 1–35 (MSGHEQQRPSRREEDVEETPVVPAQAGAQAKESDA). The interval 21–59 (VVPAQAGAQAKESDADVDALLDEIDEVLESNSEEFVRGF) is ARC ATPase binding. The stretch at 26-49 (AGAQAKESDADVDALLDEIDEVLE) forms a coiled coil. Glutamine 65 is modified (deamidated glutamine). Residue glutamine 65 forms an Isoglutamyl lysine isopeptide (Gln-Lys) (interchain with K-? in acceptor proteins) linkage.

This sequence belongs to the prokaryotic ubiquitin-like protein family. In terms of assembly, strongly interacts with the proteasome-associated ATPase ARC through a hydrophobic interface; the interacting region of Pup lies in its C-terminal half. There is one Pup binding site per ARC hexamer ring. Post-translationally, is modified by deamidation of its C-terminal glutamine to glutamate by the deamidase Dop, a prerequisite to the subsequent pupylation process.

It participates in protein degradation; proteasomal Pup-dependent pathway. Functionally, protein modifier that is covalently attached to lysine residues of substrate proteins, thereby targeting them for proteasomal degradation. The tagging system is termed pupylation. The polypeptide is Prokaryotic ubiquitin-like protein Pup (Kineococcus radiotolerans (strain ATCC BAA-149 / DSM 14245 / SRS30216)).